The primary structure comprises 685 residues: RING finger protein 145 (685 aa).

13 helical membrane-spanning segments follow: residues 53–73 (YIAL…LTLP), 77–97 (LVQL…HQLS), 123–143 (FTTA…VMQT), 151–171 (AHLL…IVFI), 174–194 (FAMI…LLVP), 225–245 (LVLP…QIYT), 275–295 (YSLL…LTLC), 316–336 (TEGI…LQVI), 340–360 (FLLS…MLEI), 384–404 (SLCL…CQFF), 410–430 (LLII…TLLI), 460–480 (LLEF…TLFG), and 482–502 (WTVM…WLRA). An RING-type; atypical zinc finger spans residues 537–575 (CSICFQDMKSAVITPCSHFFHAACLKKWLYVQETCPLCH). Positions 582-685 (LQPTSSPGTP…VSTSDVNCAS (104 aa)) are disordered. The span at 583-602 (QPTSSPGTPTQGTPAANQNP) shows a compositional bias: low complexity. The span at 620 to 631 (EGIRAEEMKTSA) shows a compositional bias: basic and acidic residues.

It is found in the membrane. The polypeptide is RING finger protein 145 (rnf145) (Danio rerio (Zebrafish)).